The following is a 431-amino-acid chain: MPQITRSIELFEKAKKFIPGGVNSPVRAFKSVGGTPIYMAKGSGAYMTDVDGNTYLDYVGSWGPFILGSMHPRITAALEYTLKNIGTSFGTPIEMEIEIAELLCQIVPSLEMVRMVNSGTEATMSAVRLARGYTGRDKIIKFEGCYHGHGDSFLIKAGSGALTLGAPDSPGVTKGTAQDTLNATYNDIESVKLLVQENKGNVAAIIIEPVAGNTGVIPAQPGFLAALRQLCDEEGIVLIFDEVMCGFRVALGGAQSLYGVTPDLTTMGKIIGGGLPVGAFGGKRKLMERVAPLGDVYQAGTLSGNPLALTAGLETLKILMDENPYPELERKAVILEEGFKANLAKLGLNYVQNRVGSMSCLFFTETPVVNYTTAITADTKKHAKYFHSLLDQGIYTAPSQFEAMFISSVMTDEDLDKTIKANYNALVASQQ.

Lys269 bears the N6-(pyridoxal phosphate)lysine mark.

It belongs to the class-III pyridoxal-phosphate-dependent aminotransferase family. HemL subfamily. As to quaternary structure, homodimer. The cofactor is pyridoxal 5'-phosphate.

The protein localises to the cytoplasm. It carries out the reaction (S)-4-amino-5-oxopentanoate = 5-aminolevulinate. Its pathway is porphyrin-containing compound metabolism; protoporphyrin-IX biosynthesis; 5-aminolevulinate from L-glutamyl-tRNA(Glu): step 2/2. The protein operates within porphyrin-containing compound metabolism; chlorophyll biosynthesis. This is Glutamate-1-semialdehyde 2,1-aminomutase from Chlorobium chlorochromatii (strain CaD3).